The primary structure comprises 1607 residues: Dicer-like protein 1 (1607 aa).

The interval 1–74 is disordered; sequence MNAEMREGSS…PDTKKWIVND (74 aa). The Helicase ATP-binding domain occupies 142 to 324; sequence LFERAKTQNT…IARSPELEGL (183 aa). Residue 155–162 participates in ATP binding; it reads LDTGSGKT. A DEAH box motif is present at residues 267–270; it reads DEAH. Positions 461–632 constitute a Helicase C-terminal domain; the sequence is KVVILLRILR…EALPADRKLT (172 aa). One can recognise a Dicer dsRNA-binding fold domain in the interval 665 to 755; that stretch reads SLICLAAFVA…RPTFTKQLPA (91 aa). The 136-residue stretch at 905 to 1040 folds into the PAZ domain; sequence GAVTFVRDNE…IVLEPLRISP (136 aa). RNase III domains lie at 1063 to 1219 and 1272 to 1447; these read LVAL…LTAQ and AARF…VDSR. Residues glutamate 1312, aspartate 1433, and glutamate 1436 each contribute to the Mg(2+) site. In terms of domain architecture, DRBM spans 1478–1556; the sequence is HPVTFLAGIM…AKKAIQVLEG (79 aa). Residues cysteine 1493, histidine 1527, cysteine 1568, and cysteine 1570 each contribute to the Zn(2+) site.

It belongs to the helicase family. Dicer subfamily. Mg(2+) is required as a cofactor. Requires Mn(2+) as cofactor.

In terms of biological role, dicer-like endonuclease involved in cleaving double-stranded RNA in the RNA interference (RNAi) pathway. Produces 21 to 25 bp dsRNAs (siRNAs) which target the selective destruction of homologous RNAs leading to sequence-specific suppression of gene expression, called post-transcriptional gene silencing (PTGS). Part of a broad host defense response against viral infection and transposons. This chain is Dicer-like protein 1 (DCL1), found in Chaetomium globosum (strain ATCC 6205 / CBS 148.51 / DSM 1962 / NBRC 6347 / NRRL 1970) (Soil fungus).